The primary structure comprises 97 residues: Cell division topological specificity factor (97 aa).

Belongs to the MinE family.

Its function is as follows. Prevents the cell division inhibition by proteins MinC and MinD at internal division sites while permitting inhibition at polar sites. This ensures cell division at the proper site by restricting the formation of a division septum at the midpoint of the long axis of the cell. The chain is Cell division topological specificity factor from Rhodospirillum centenum (strain ATCC 51521 / SW).